A 104-amino-acid polypeptide reads, in one-letter code: MSSTLDSQHDLVAEKQSARTAPPPMYQVVLLNDDYTPMEFVVKVLQKFFGKNQEEATRIMLQVHHEGRGICGVYVRDVAATRIAQVAQYARARQHPLQCIMEPV.

It belongs to the ClpS family. As to quaternary structure, binds to the N-terminal domain of the chaperone ClpA.

In terms of biological role, involved in the modulation of the specificity of the ClpAP-mediated ATP-dependent protein degradation. In Bordetella avium (strain 197N), this protein is ATP-dependent Clp protease adapter protein ClpS.